The chain runs to 517 residues: GMP synthase [glutamine-hydrolyzing] (517 aa).

In terms of domain architecture, Glutamine amidotransferase type-1 spans Arg-9–Leu-199. The active-site Nucleophile is the Cys-86. Active-site residues include His-173 and Glu-175. The 193-residue stretch at Trp-200–Arg-392 folds into the GMPS ATP-PPase domain. Ser-227–Ser-233 contacts ATP.

Homodimer.

The catalysed reaction is XMP + L-glutamine + ATP + H2O = GMP + L-glutamate + AMP + diphosphate + 2 H(+). It functions in the pathway purine metabolism; GMP biosynthesis; GMP from XMP (L-Gln route): step 1/1. Catalyzes the synthesis of GMP from XMP. The polypeptide is GMP synthase [glutamine-hydrolyzing] (Vibrio vulnificus (strain CMCP6)).